A 258-amino-acid polypeptide reads, in one-letter code: Acyl-[acyl-carrier-protein]--UDP-N-acetylglucosamine O-acyltransferase (258 aa).

This sequence belongs to the transferase hexapeptide repeat family. LpxA subfamily. As to quaternary structure, homotrimer.

Its subcellular location is the cytoplasm. It catalyses the reaction a (3R)-hydroxyacyl-[ACP] + UDP-N-acetyl-alpha-D-glucosamine = a UDP-3-O-[(3R)-3-hydroxyacyl]-N-acetyl-alpha-D-glucosamine + holo-[ACP]. The protein operates within glycolipid biosynthesis; lipid IV(A) biosynthesis; lipid IV(A) from (3R)-3-hydroxytetradecanoyl-[acyl-carrier-protein] and UDP-N-acetyl-alpha-D-glucosamine: step 1/6. Its function is as follows. Involved in the biosynthesis of lipid A, a phosphorylated glycolipid that anchors the lipopolysaccharide to the outer membrane of the cell. The protein is Acyl-[acyl-carrier-protein]--UDP-N-acetylglucosamine O-acyltransferase of Pseudomonas putida (strain ATCC 47054 / DSM 6125 / CFBP 8728 / NCIMB 11950 / KT2440).